We begin with the raw amino-acid sequence, 139 residues long: D-ribose pyranase (139 aa).

The Proton donor role is filled by H20. Residues D28, H106, and 128 to 130 each bind substrate; that span reads YAN.

This sequence belongs to the RbsD / FucU family. RbsD subfamily. Homodecamer.

It localises to the cytoplasm. The enzyme catalyses beta-D-ribopyranose = beta-D-ribofuranose. It functions in the pathway carbohydrate metabolism; D-ribose degradation; D-ribose 5-phosphate from beta-D-ribopyranose: step 1/2. Catalyzes the interconversion of beta-pyran and beta-furan forms of D-ribose. The protein is D-ribose pyranase of Histophilus somni (strain 129Pt) (Haemophilus somnus).